Consider the following 345-residue polypeptide: C5a anaphylatoxin chemotactic receptor 1 (345 aa).

The Extracellular segment spans residues 1–32; sequence MMVTVSYDYDYNSTFLPDGFVDNYVERLSFGD. A sulfotyrosine mark is found at Tyr9 and Tyr11. An N-linked (GlcNAc...) asparagine glycan is attached at Asn12. A helical membrane pass occupies residues 33–59; the sequence is LVAVVIMVVVFLVGVPGNALVVWVTAC. Residues 60-64 lie on the Cytoplasmic side of the membrane; that stretch reads EARRH. A helical membrane pass occupies residues 65–88; the sequence is INAIWFLNLAAADLLSCLALPILL. Residues 89-105 are Extracellular-facing; it reads VSTVHLNHWYFGDTACK. A disulfide bond links Cys104 and Cys183. Residues 106–127 traverse the membrane as a helical segment; that stretch reads VLPSLILLNMYTSILLLATISA. Residues 128–148 lie on the Cytoplasmic side of the membrane; the sequence is DRLLLVLSPIWCQRFRGGCLA. The chain crosses the membrane as a helical span at residues 149 to 169; that stretch reads WTACGLAWVLALLLSSPSFLY. Topologically, residues 170 to 195 are extracellular; it reads RRTHNEHFSFKVYCVTDYGRDISKER. The helical transmembrane segment at 196–221 threads the bilayer; the sequence is AVALVRLLVGFIVPLITLTACYTFLL. Residues 222–237 are Cytoplasmic-facing; it reads LRTWSRKATRSAKTVK. Residues 238–260 form a helical membrane-spanning segment; the sequence is VVVAVVSSFFVFWLPYQVTGILL. Topologically, residues 261-277 are extracellular; the sequence is AWHSPNSATYRNTKALD. The chain crosses the membrane as a helical span at residues 278–298; it reads AVCVAFAYINCCINPIIYVVA. The Cytoplasmic segment spans residues 299 to 345; that stretch reads GHGFQGRLLKSLPSVLRNVLTEESLDKRHQSFARSTVDTMPQKSESV. Ser309, Ser312, Ser322, Ser329, and Ser333 each carry phosphoserine.

It belongs to the G-protein coupled receptor 1 family. As to quaternary structure, homodimer. May also form higher-order oligomers. Interacts (when phosphorylated) with ARRB1 and ARRB2; the interaction is associated with internalization of C5aR. Sulfation plays a critical role in the association of C5aR with C5a, but no significant role in the ability of the receptor to transduce a signal and mobilize calcium in response to a small peptide agonist. In terms of processing, phosphorylated on serine residues in response to C5a binding, resulting in internalization of the receptor and short-term desensitization to C5a. In terms of tissue distribution, expressed strongly in macrophages and spleen. Weak expression detected in lung, liver, brain, heart and kidney.

The protein resides in the cell membrane. It localises to the cytoplasmic vesicle. Its function is as follows. Receptor for the chemotactic and inflammatory peptide anaphylatoxin C5a. The ligand interacts with at least two sites on the receptor: a high-affinity site on the extracellular N-terminus, and a second site in the transmembrane region which activates downstream signaling events. Receptor activation stimulates chemotaxis, granule enzyme release, intracellular calcium release and superoxide anion production. The protein is C5a anaphylatoxin chemotactic receptor 1 (C5AR1) of Cavia porcellus (Guinea pig).